A 312-amino-acid chain; its full sequence is Olfactory receptor 1D2 (312 aa).

The Extracellular segment spans residues 1–25 (MDGGNQSEGSEFLLLGMSESPEQQQ). The N-linked (GlcNAc...) asparagine glycan is linked to Asn5. The chain crosses the membrane as a helical span at residues 26–49 (ILFWMFLSMYLVTVVGNVLIILAI). Over 50–57 (NSDSHLHT) the chain is Cytoplasmic. Residues 58–79 (PMYFFLANLSFTDLFFVTNTIP) traverse the membrane as a helical segment. Residues 80 to 100 (KMLVNLQSQNKAISYAGCLTQ) lie on the Extracellular side of the membrane. Cysteines 97 and 189 form a disulfide. The chain crosses the membrane as a helical span at residues 101-120 (LYFLVSLVALDNLILAVMAY). The Cytoplasmic portion of the chain corresponds to 121–139 (DRYVAICCPLHYTTAMSPK). A helical membrane pass occupies residues 140 to 158 (LCILLLSLCWVLSVLYGLI). The Extracellular segment spans residues 159–196 (HTILMTRVTFCGSRKIHYIFCEMYVLLRMACSNIQINH). Residue Asn195 is glycosylated (N-linked (GlcNAc...) asparagine). Residues 197 to 219 (TVLIATGCFIFLIPFGFVIISYV) traverse the membrane as a helical segment. At 220-236 (LIIRAILRIPSVSKKYK) the chain is on the cytoplasmic side. The helical transmembrane segment at 237-259 (AFSTCASHLGAVSLFYGTLCMVY) threads the bilayer. Residues 260-271 (LKPLHTFSVKDS) lie on the Extracellular side of the membrane. A helical membrane pass occupies residues 272 to 291 (VATVMYAVVTPMMNPFIYSL). The Cytoplasmic portion of the chain corresponds to 292–312 (RNKDMHGALGRLLDTHFKRLT).

This sequence belongs to the G-protein coupled receptor 1 family.

Its subcellular location is the cell membrane. In terms of biological role, odorant receptor. This Gorilla gorilla gorilla (Western lowland gorilla) protein is Olfactory receptor 1D2 (OR1D2).